The following is a 335-amino-acid chain: [Citrate [pro-3S]-lyase] ligase (335 aa).

The N-acetyltransferase domain maps to 1–131 (MQFERISTEQ…SATRLQKQCS (131 aa)).

The enzyme catalyses holo-[citrate lyase ACP] + acetate + ATP = acetyl-[citrate lyase ACP] + AMP + diphosphate. Functionally, acetylation of prosthetic group (2-(5''-phosphoribosyl)-3'-dephosphocoenzyme-A) of the gamma subunit of citrate lyase. This Haemophilus influenzae (strain ATCC 51907 / DSM 11121 / KW20 / Rd) protein is [Citrate [pro-3S]-lyase] ligase (citC).